The chain runs to 303 residues: tRNA pseudouridine synthase-like 1 (303 aa).

Asp66 serves as the catalytic Nucleophile. Phosphoserine is present on Ser84. Tyr130 is a substrate binding site.

This sequence belongs to the tRNA pseudouridine synthase TruA family.

It carries out the reaction a uridine in tRNA = a pseudouridine in tRNA. The protein is tRNA pseudouridine synthase-like 1 (PUSL1) of Homo sapiens (Human).